The following is a 282-amino-acid chain: MIVFISLFTLFLTLLSILTNNVIVWWSIFLLMTVVFILLNKSSKSYTSIFNYFVIQESLGLLFLLCSGGLLQFFIILLKIGVAPLHFWIFNVTNNIFNYGLMWFLTFQKLPFLTILLQIFWLSSVYILLFGLLICYVQIFVMKSYKNLLIISSTESFNWIVLGVFFSMFNTFYLFIYYFVLMVLLISKFSKTSGYNFINWETTLVFLNIPFSVSFFVKIFSLSEIFKYDSFFTLFLLFTMFLSVLAFSFWLINLSMKNNEETSNNNKMNYFIIFPLMVISII.

7 helical membrane passes run 17–37 (ILTN…VVFI), 58–78 (SLGL…IILL), 87–107 (FWIF…FLTF), 115–135 (ILLQ…LLIC), 166–186 (FSMF…VLLI), 202–222 (TTLV…IFSL), and 232–252 (FTLF…FWLI).

This sequence belongs to the complex I subunit 2 family.

The protein resides in the mitochondrion inner membrane. It catalyses the reaction a ubiquinone + NADH + 5 H(+)(in) = a ubiquinol + NAD(+) + 4 H(+)(out). Its function is as follows. Core subunit of the mitochondrial membrane respiratory chain NADH dehydrogenase (Complex I) that is believed to belong to the minimal assembly required for catalysis. Complex I functions in the transfer of electrons from NADH to the respiratory chain. The immediate electron acceptor for the enzyme is believed to be ubiquinone. This Caenorhabditis elegans protein is NADH-ubiquinone oxidoreductase chain 2.